The following is a 1322-amino-acid chain: BRCA2-interacting transcriptional repressor EMSY (1322 aa).

Residues 1–478 form an interaction with BRCA2 region; it reads MPVVWPTLLD…LPKPVTATLP (478 aa). One can recognise an ENT domain in the interval 16–100; that stretch reads CKRILRKLEL…EWSIEGRRLV (85 aa). The tract at residues 104–108 is interaction with ZMYND11; the sequence is PRLVP. A compositionally biased stretch (low complexity) spans 148-162; the sequence is STTSTPTSTPVPSGS. Disordered regions lie at residues 148 to 178 and 192 to 215; these read STTSTPTSTPVPSGSIATVKSPRPASPASNV and VSCSDEDEKPRKRRRTNSSSSSPV. At Thr-207 the chain carries Phosphothreonine. Phosphoserine occurs at positions 209 and 213. Ser-228 and Ser-236 each carry an O-linked (GlcNAc) serine glycan. At Ser-238 the chain carries Phosphoserine. Residue Thr-271 is glycosylated (O-linked (GlcNAc) threonine). The segment covering 417–437 has biased composition (low complexity); the sequence is QQTQQQVAQPSPVSHQQQPQQ. Residues 417-444 form a disordered region; that stretch reads QQTQQQVAQPSPVSHQQQPQQSPLPPGI. O-linked (GlcNAc) threonine glycans are attached at residues Thr-501 and Thr-506. O-linked (GlcNAc) serine glycosylation occurs at Ser-557. A compositionally biased stretch (polar residues) spans 698–707; the sequence is VAEAGNSSIQ. The disordered stretch occupies residues 698–736; that stretch reads VAEAGNSSIQEGKEEPQNYTDSSSSSTESSQSSQDSQPV. A compositionally biased stretch (low complexity) spans 717-734; that stretch reads TDSSSSSTESSQSSQDSQ. Residues Ser-818 and Ser-821 each carry the phosphoserine modification. Thr-1120 carries O-linked (GlcNAc) threonine glycosylation. Ser-1136 carries the phosphoserine modification. Residues 1205-1223 show a composition bias toward polar residues; the sequence is QKCRESCSSPSTVGSSLTT. Disordered stretches follow at residues 1205–1231 and 1290–1322; these read QKCRESCSSPSTVGSSLTTRKIDPPAV and QLDDEETAMEQDIDSSTEDGTEPSPSQSSAERS. The span at 1291–1310 shows a compositional bias: acidic residues; that stretch reads LDDEETAMEQDIDSSTEDGT. Over residues 1312-1322 the composition is skewed to polar residues; sequence PSPSQSSAERS.

In terms of assembly, homodimer. Interacts with the transactivation domain of BRCA2. Interacts with CBX1 (via chromoshadow domain). Interacts with ZMYND11. Does not interact with CBX3 or CBX5. Component of a nuclear receptor-mediated transcription complex composed of at least ZNF335, CCAR2 and EMSY; the complex stimulates the transcription of nuclear receptor target genes such as SOX9 and HOXA1. Within the complex interacts with CCAR2 and ZNF335. Components of this complex may associate with components of a histone methylation complex to form a complex at least composed of ZNF335, HCFC1, CCAR2, EMSY, MKI67, RBBP5, ASH2L and WDR5. Within this complex, interacts with ASH2L and RBBP5. In terms of processing, O-glycosylated during cytokinesis at sites identical or close to phosphorylation sites, this interferes with the phosphorylation status.

The protein localises to the nucleus. Regulator which is able to repress transcription, possibly via its interaction with a multiprotein chromatin remodeling complex that modifies the chromatin. Its interaction with BRCA2 suggests that it may play a central role in the DNA repair function of BRCA2. Mediates ligand-dependent transcriptional activation by nuclear hormone receptors. This Homo sapiens (Human) protein is BRCA2-interacting transcriptional repressor EMSY.